A 459-amino-acid chain; its full sequence is ATP-dependent protease ATPase subunit HslU (459 aa).

Residues valine 21, 63–68 (GVGKTE), aspartate 273, glutamate 338, and arginine 410 each bind ATP.

The protein belongs to the ClpX chaperone family. HslU subfamily. A double ring-shaped homohexamer of HslV is capped on each side by a ring-shaped HslU homohexamer. The assembly of the HslU/HslV complex is dependent on binding of ATP.

The protein resides in the cytoplasm. Its function is as follows. ATPase subunit of a proteasome-like degradation complex; this subunit has chaperone activity. The binding of ATP and its subsequent hydrolysis by HslU are essential for unfolding of protein substrates subsequently hydrolyzed by HslV. HslU recognizes the N-terminal part of its protein substrates and unfolds these before they are guided to HslV for hydrolysis. In Thermosipho africanus (strain TCF52B), this protein is ATP-dependent protease ATPase subunit HslU.